The following is a 435-amino-acid chain: Protein SUPPRESSOR OF K(+) TRANSPORT GROWTH DEFECT 1 (435 aa).

An MIT domain is found at 7–72 (EQAIEYVKQA…LRRAEEIRAV (66 aa)). The disordered stretch occupies residues 73–113 (LDEGGSGPGSNGDAAVATRPKTKPKDGEGGGKDGEDPEQSK). Residues 95 to 113 (KPKDGEGGGKDGEDPEQSK) show a composition bias toward basic and acidic residues. Position 172 to 179 (172 to 179 (GPPGTGKS)) interacts with ATP.

Belongs to the AAA ATPase family. As to quaternary structure, monomer or homodimer (in nucleotide-free form). Decamer, dodecamer or tetradecamer of two stacked respective homooligomeric rings (when bound to ATP); the dodecameric form seems to be predominant. Interacts with members of the ESCRT-III subcomplex such as LIP5, VPS60-1, VPS2.1, VPS20.1, VPS20.2, VPS24-1, VPS32.1, VPS32.2, CHMP1A and VPS24. Binds to PROS/At4g24370. In terms of tissue distribution, mostly expressed in leaves, to a lower extent in seeds, and barely in roots and flowers (at protein level). Particularly expressed in trichomes.

The protein localises to the cytoplasm. It is found in the nucleus. Its subcellular location is the endosome. It localises to the multivesicular body membrane. The protein resides in the prevacuolar compartment membrane. It carries out the reaction ATP + H2O = ADP + phosphate + H(+). Its activity is regulated as follows. Activated by LIP5 and PROS. Functionally, involved in the transport of biosynthetic membrane proteins from the prevacuolar/endosomal compartment to the vacuole. Required for multivesicular body (MVB) protein sorting. Catalyzes the ATP-dependent dissociation of class E VPS proteins from endosomal membranes, such as the disassembly of the ESCRT-III complex. May also regulate cell cycle. Required during seed development for the formation of mucilage in seed coat and testa. Involved in the maintenance of Na(+)/K(+) homeostasis under salt stress. Required for cell expansion. The polypeptide is Protein SUPPRESSOR OF K(+) TRANSPORT GROWTH DEFECT 1 (Arabidopsis thaliana (Mouse-ear cress)).